The sequence spans 284 residues: Tropomyosin Per a 7.0103 (284 aa).

A coiled-coil region spans residues 1 to 266 (MDAIKKKMQA…EDELVHEKEK (266 aa)).

The protein belongs to the tropomyosin family. In terms of assembly, homodimer.

In terms of biological role, tropomyosin, in association with the troponin complex, plays a central role in the calcium dependent regulation of muscle contraction. The chain is Tropomyosin Per a 7.0103 from Periplaneta americana (American cockroach).